A 458-amino-acid polypeptide reads, in one-letter code: MSTGKIIQVIGAVIDVEFARDNTPKVYDALNVVEAGLVLEVQQQIGDGVVRTIAMGSSDGLRRGMEVKNTNAPISVPVGHGTLGRIMNVLGEPIDEAGPIEYTEKRSIHQAPPAYDELALSTEILETGIKVVDLICPFAKGGKVGLFGGAGVGKTVTMMELINNIAKEHSGYSVFAGVGERTREGNDFYYEMKDSNVLDKVSLVYGQMNEPPGNRLRVALSGLTIAEGFRDEKRDVLMFIDNIYRYTLAGTEVSALLGRMPSAVGYQPTLAAEMGALQERITSTKTGSITSVQAVYVPADDLTDPSPATTFSHLDATIVLSRQIAELGIYPAVDPLDSTSRQLDPLVVGQDHYEIARAVQKVLQRYKELKDIIAILGMDELSDEDKKIVDRARKIQRFLSQPFHVAEVFTGNPGKFVSLKDTVASFKAIVNGEYDHLPEQAFYMVGSIQEAIEKAKTL.

Residue 148–155 (GGAGVGKT) participates in ATP binding.

This sequence belongs to the ATPase alpha/beta chains family. In terms of assembly, F-type ATPases have 2 components, CF(1) - the catalytic core - and CF(0) - the membrane proton channel. CF(1) has five subunits: alpha(3), beta(3), gamma(1), delta(1), epsilon(1). CF(0) has three main subunits: a(1), b(2) and c(9-12). The alpha and beta chains form an alternating ring which encloses part of the gamma chain. CF(1) is attached to CF(0) by a central stalk formed by the gamma and epsilon chains, while a peripheral stalk is formed by the delta and b chains.

The protein localises to the cell inner membrane. It catalyses the reaction ATP + H2O + 4 H(+)(in) = ADP + phosphate + 5 H(+)(out). In terms of biological role, produces ATP from ADP in the presence of a proton gradient across the membrane. The catalytic sites are hosted primarily by the beta subunits. The protein is ATP synthase subunit beta of Francisella tularensis subsp. mediasiatica (strain FSC147).